We begin with the raw amino-acid sequence, 77 residues long: U14-theraphotoxin-Cg1a 1 (77 aa).

Positions Met1 to Ala21 are cleaved as a signal peptide. A propeptide spanning residues Ser22–Arg49 is cleaved from the precursor. 3 disulfides stabilise this stretch: Cys50-Cys64, Cys57-Cys69, and Cys63-Cys75. Residue Lys77 is modified to Lysine amide.

The protein belongs to the neurotoxin 10 (Hwtx-1) family. 65 (Jztx-21) subfamily. In terms of tissue distribution, expressed by the venom gland.

The protein localises to the secreted. Its function is as follows. Probable ion channel inhibitor. This is U14-theraphotoxin-Cg1a 1 from Chilobrachys guangxiensis (Chinese earth tiger tarantula).